The sequence spans 870 residues: H(+)/Cl(-) exchange transporter 6 (870 aa).

Over 1-80 the chain is Cytoplasmic; sequence MAGCRGSVCC…KKGRRYEAVK (80 aa). Helical transmembrane passes span 81–113 and 128–150; these read WMVV…FGVV and LSLL…LVLI. The Selectivity filter part_1 signature appears at 156–160; sequence GSGIP. Ser-157 is a binding site for chloride. Positions 159–166 form an intramembrane region, helical; that stretch reads IPEIKCYL. 2 helical membrane passes run 176–194 and 200–217; these read RLRT…VSGG and EGPM…LPQF. A Selectivity filter part_2 motif is present at residues 198–202; sequence GKEGP. 2 intramembrane regions (helical) span residues 241–253 and 257–265; these read FVSA…VAAA and PIGGTLFSL. Helical transmembrane passes span 277-294, 335-364, and 371-392; these read TWKV…LNFF, GFFV…YRMR, and KLVR…VFVA. Asn-410, Asn-423, and Asn-433 each carry an N-linked (GlcNAc...) asparagine glycan. The next 2 membrane-spanning stretches (helical) occupy residues 463 to 482 and 488 to 512; these read PVTL…WTFG and GLFV…KSYI. The short motif at 488 to 492 is the Selectivity filter part_3 element; that stretch reads GLFVP. Phe-490 contacts chloride. An intramembrane region (helical) is located at residues 520-534; sequence GTFALIGAAAFLGGV. The note=Loop between two helices intramembrane region spans 535–537; that stretch reads VRM. Residues 538 to 549 constitute an intramembrane region (helical); sequence TISLTVILIEST. An intramembrane region (note=Loop between two helices) is located at residues 550–553; it reads NEIT. A helical membrane pass occupies residues 554–572; it reads YGLPIMVTLMVAKWTGDLF. Residues 573–870 are Cytoplasmic-facing; it reads NKGIYDVHIG…ARLRQHYQTL (298 aa). Residue Tyr-577 participates in chloride binding. The region spanning 606 to 663 is the CBS 1 domain; it reads MEPNLTYVYPHTRIQSLVSILRTTVHHAFPVVTENRGNEKEFMKGNQLISNNIKFKKS. 631–633 contacts ATP; it reads HHA. Ser-774 is subject to Phosphoserine. One can recognise a CBS 2 domain in the interval 808-869; sequence MNPSPFTVSP…QARLRQHYQT (62 aa). 850–853 lines the ATP pocket; sequence TRHN.

The protein belongs to the chloride channel (TC 2.A.49) family. ClC-6/CLCN6 subfamily. N-glycosylated on several asparagine residues. In terms of tissue distribution, detected in whole brain and in hippocampus neurons (at protein level). Detected in brain, trigeminus, dorsal root ganglion, spinal cord, eye, kidney, testis, skeletal muscle, thymus and pancreas. Isoform ClC-6c is expressed only in kidney.

The protein localises to the late endosome membrane. The catalysed reaction is 2 chloride(in) + H(+)(out) = 2 chloride(out) + H(+)(in). Its function is as follows. Voltage-gated channel mediating the exchange of chloride ions against protons. Functions as antiporter and contributes to the acidification of the late endosome lumen. The CLC channel family contains both chloride channels and proton-coupled anion transporters that exchange chloride or another anion for protons. The presence of conserved gating glutamate residues is typical for family members that function as antiporters. The polypeptide is H(+)/Cl(-) exchange transporter 6 (Mus musculus (Mouse)).